The sequence spans 89 residues: UPF0297 protein SEQ_2150 (89 aa).

The protein belongs to the UPF0297 family.

This chain is UPF0297 protein SEQ_2150, found in Streptococcus equi subsp. equi (strain 4047).